Consider the following 62-residue polypeptide: MAVPRANTSKARTRRRRGVNMRLQAPNLVECSGCGNLIMPHHVCPKCGFYKGKQVINPDKLD.

This sequence belongs to the bacterial ribosomal protein bL32 family.

The protein is Large ribosomal subunit protein bL32 of Treponema denticola (strain ATCC 35405 / DSM 14222 / CIP 103919 / JCM 8153 / KCTC 15104).